The primary structure comprises 415 residues: MNEPEGLRFRRLNRPHIITDETHEPQYKATSTYSGKVFRVTLLTMVAFLLLPLLVVVFVLESPIQPEVFSLNEPPLMTGCYEPNLKLRQAERLFEERLVGPESLANIGDVFYTGTADGKIVKIEGRNIHVLATIGKPPCGSREHEHTCGRPLGIRVGPNGTLFVADAYLGLFEVNPVTGEVKSLVSTEKRIAGRRLGFVNDLDVTQDGKKVYFTDSSSRWQRRDFMHLIMEATADGRVLEYDTETKEVNVMMENLRFPNGIQLFPDEESVLVAETTMARIKRVHVSGLNKGGMDTFIENLPGFPDNIRRSSSGGYWVAMSAVRPNPGFSMLDFLSQRPWLKKLIFKLFSQDTLLKFVPRYSLVVELQSDGTCVRSFHDPQGLVSAYSSEAHEYSGHLYLGSFRSPYLCKLDLSKV.

At 1-39 the chain is on the cytoplasmic side; sequence MNEPEGLRFRRLNRPHIITDETHEPQYKATSTYSGKVFR. Residues 40–60 traverse the membrane as a helical segment; the sequence is VTLLTMVAFLLLPLLVVVFVL. The Extracellular portion of the chain corresponds to 61-412; that stretch reads ESPIQPEVFS…RSPYLCKLDL (352 aa). The N-linked (GlcNAc...) asparagine glycan is linked to N159.

Belongs to the strictosidine synthase family.

Its subcellular location is the membrane. In Danio rerio (Zebrafish), this protein is Adipocyte plasma membrane-associated protein (apmap).